The following is a 255-amino-acid chain: Probable iron chelatin transport ATP-binding protein jhp_0821 (255 aa).

Positions 3-240 constitute an ABC transporter domain; sequence LEVKNLSFKY…HNLSALYDTP (238 aa). An ATP-binding site is contributed by 35-42; the sequence is APNGSGKT.

It belongs to the ABC transporter superfamily.

Its subcellular location is the cell inner membrane. Its function is as follows. Part of a binding-protein-dependent transport system for an iron chelatin. Probably responsible for energy coupling to the transport system (Potential). The sequence is that of Probable iron chelatin transport ATP-binding protein jhp_0821 from Helicobacter pylori (strain J99 / ATCC 700824) (Campylobacter pylori J99).